A 714-amino-acid polypeptide reads, in one-letter code: Polyribonucleotide nucleotidyltransferase (714 aa).

Positions 487 and 493 each coordinate Mg(2+). One can recognise a KH domain in the interval 554–613 (PRIEVMTIPVDKIREVIGSGGKVIREIVEKTGAKINIEDDGTIKIASASGKEIEAARKWI). Residues 623–691 (GVVYEGTVVK…ERGKVRLSMK (69 aa)) form the S1 motif domain.

It belongs to the polyribonucleotide nucleotidyltransferase family. Mg(2+) serves as cofactor.

The protein resides in the cytoplasm. It carries out the reaction RNA(n+1) + phosphate = RNA(n) + a ribonucleoside 5'-diphosphate. Functionally, involved in mRNA degradation. Catalyzes the phosphorolysis of single-stranded polyribonucleotides processively in the 3'- to 5'-direction. The sequence is that of Polyribonucleotide nucleotidyltransferase from Allorhizobium ampelinum (strain ATCC BAA-846 / DSM 112012 / S4) (Agrobacterium vitis (strain S4)).